Here is a 346-residue protein sequence, read N- to C-terminus: Small ribosomal subunit biogenesis GTPase RsgA (346 aa).

The segment at 1–25 (MAKRKLTQNQTRRIQSNNAKTLHRH) is disordered. Residues 7–20 (TQNQTRRIQSNNAK) show a composition bias toward polar residues. Residues 103 to 271 (ENEISRPDYY…LIDSPGIREF (169 aa)) enclose the CP-type G domain. GTP-binding positions include 159-162 (NKVD) and 213-221 (GQSGVGKSS). Residues C295, C300, H302, and C308 each contribute to the Zn(2+) site.

This sequence belongs to the TRAFAC class YlqF/YawG GTPase family. RsgA subfamily. As to quaternary structure, monomer. Associates with 30S ribosomal subunit, binds 16S rRNA. The cofactor is Zn(2+).

It localises to the cytoplasm. Functionally, one of several proteins that assist in the late maturation steps of the functional core of the 30S ribosomal subunit. Helps release RbfA from mature subunits. May play a role in the assembly of ribosomal proteins into the subunit. Circularly permuted GTPase that catalyzes slow GTP hydrolysis, GTPase activity is stimulated by the 30S ribosomal subunit. The protein is Small ribosomal subunit biogenesis GTPase RsgA of Haemophilus influenzae (strain ATCC 51907 / DSM 11121 / KW20 / Rd).